A 163-amino-acid chain; its full sequence is Large ribosomal subunit protein uL10 (163 aa).

This sequence belongs to the universal ribosomal protein uL10 family. As to quaternary structure, part of the ribosomal stalk of the 50S ribosomal subunit. The N-terminus interacts with L11 and the large rRNA to form the base of the stalk. The C-terminus forms an elongated spine to which L12 dimers bind in a sequential fashion forming a multimeric L10(L12)X complex.

In terms of biological role, forms part of the ribosomal stalk, playing a central role in the interaction of the ribosome with GTP-bound translation factors. The sequence is that of Large ribosomal subunit protein uL10 (rplJ) from Haemophilus influenzae (strain ATCC 51907 / DSM 11121 / KW20 / Rd).